Consider the following 139-residue polypeptide: Peptide methionine sulfoxide reductase MsrB (139 aa).

In terms of domain architecture, MsrB spans 14-137; the sequence is DEEWRRELTP…NSISLDFQPE (124 aa). Zn(2+) contacts are provided by Cys53, Cys56, Cys102, and Cys105. Catalysis depends on Cys126, which acts as the Nucleophile.

It belongs to the MsrB Met sulfoxide reductase family. Zn(2+) serves as cofactor.

It carries out the reaction L-methionyl-[protein] + [thioredoxin]-disulfide + H2O = L-methionyl-(R)-S-oxide-[protein] + [thioredoxin]-dithiol. The chain is Peptide methionine sulfoxide reductase MsrB from Leifsonia xyli subsp. xyli (strain CTCB07).